We begin with the raw amino-acid sequence, 241 residues long: Cobalt transport protein CbiM (241 aa).

An N-terminal signal peptide occupies residues 1-23 (MKKNLTFFMVIALLFTITPNVYA). 6 helical membrane-spanning segments follow: residues 29-49 (GFLPPMWSGVYFVISAPFIII), 66-86 (MLLGLVAAYAFILSAMKIPSV), 98-118 (LSAIIFGPFISAIVGLIVLIF), 121-141 (ILLAHGGITTLGANTLSMGIM), 160-180 (VAVFLAATLGDLFTYFITSVQ), and 202-222 (IFSITQIPLAIMEGILTVIIF).

The protein belongs to the CbiM family. As to quaternary structure, forms an energy-coupling factor (ECF) transporter complex composed of an ATP-binding protein (A component, CbiO), a transmembrane protein (T component, CbiQ) and 2 possible substrate-capture proteins (S components, CbiM and CbiN) of unknown stoichimetry.

The protein resides in the cell membrane. Its pathway is cofactor biosynthesis; adenosylcobalamin biosynthesis. Part of the energy-coupling factor (ECF) transporter complex CbiMNOQ involved in cobalt import. The polypeptide is Cobalt transport protein CbiM (Clostridium tetani (strain Massachusetts / E88)).